We begin with the raw amino-acid sequence, 889 residues long: Translation initiation factor IF-2 (889 aa).

Residues 115–236 (EAEAQAKAEA…EAERYSDHHI (122 aa)) show a composition bias toward basic and acidic residues. The interval 115–293 (EAEAQAKAEA…RNRSTAPESM (179 aa)) is disordered. The segment covering 257–270 (GRRARNKNTAKTKR) has biased composition (basic residues). Over residues 271–280 (GGKDARDGRE) the composition is skewed to basic and acidic residues. The region spanning 389-558 (PRAPVVTIMG…LLQAEVLELK (170 aa)) is the tr-type G domain. Residues 398–405 (GHVDHGKT) are G1. 398–405 (GHVDHGKT) contributes to the GTP binding site. The interval 423 to 427 (GITQH) is G2. Residues 444–447 (DTPG) form a G3 region. GTP-binding positions include 444-448 (DTPGH) and 498-501 (NKMD). Positions 498–501 (NKMD) are G4. Residues 534 to 536 (SAK) form a G5 region.

Belongs to the TRAFAC class translation factor GTPase superfamily. Classic translation factor GTPase family. IF-2 subfamily.

The protein resides in the cytoplasm. Its function is as follows. One of the essential components for the initiation of protein synthesis. Protects formylmethionyl-tRNA from spontaneous hydrolysis and promotes its binding to the 30S ribosomal subunits. Also involved in the hydrolysis of GTP during the formation of the 70S ribosomal complex. This Shewanella sp. (strain ANA-3) protein is Translation initiation factor IF-2.